The chain runs to 260 residues: 3'-5' ssDNA/RNA exonuclease TatD (260 aa).

The a divalent metal cation site is built by Glu92, His128, and His153.

It belongs to the metallo-dependent hydrolases superfamily. TatD-type hydrolase family. TatD subfamily. As to quaternary structure, monomer. Requires Mg(2+) as cofactor.

The protein localises to the cytoplasm. 3'-5' exonuclease that prefers single-stranded DNA and RNA. May play a role in the H(2)O(2)-induced DNA damage repair. This is 3'-5' ssDNA/RNA exonuclease TatD from Pantoea vagans (strain C9-1) (Pantoea agglomerans (strain C9-1)).